The primary structure comprises 191 residues: Signal peptidase IB (191 aa).

Residues 1-7 are Cytoplasmic-facing; sequence MKKEILE. The helical transmembrane segment at 8–28 threads the bilayer; sequence WIISIAVAFVILFIVGKFIVT. The Extracellular portion of the chain corresponds to 29 to 191; that stretch reads PYTIKGESMD…HNFNPENTKN (163 aa). Residues S36 and K77 contribute to the active site.

The protein belongs to the peptidase S26 family.

It is found in the cell membrane. The catalysed reaction is Cleavage of hydrophobic, N-terminal signal or leader sequences from secreted and periplasmic proteins.. Its function is as follows. Essential for cell viability. The chain is Signal peptidase IB (spsB) from Staphylococcus aureus (strain COL).